Consider the following 403-residue polypeptide: Para-nitrophenol 4-monooxygenase (403 aa).

Residues 6–35 (GVVV…VLEA) and 279–289 (FRRGRVVLAGD) each bind FAD.

It belongs to the PheA/TfdB FAD monooxygenase family. Monomer. It depends on FAD as a cofactor.

The catalysed reaction is 4-nitrophenol + NADPH + O2 + H(+) = 1,4-benzoquinone + nitrite + NADP(+) + H2O. Its pathway is xenobiotic degradation; 4-nitrophenol degradation. Involved in the degradation of para-nitrophenol (4-NP). Catalyzes oxidation of 4-nitrophenol (4-NP) at position 4 with concomitant removal of the nitro group as nitrite and production of para-benzoquinone. The protein is Para-nitrophenol 4-monooxygenase (pnpA) of Pseudomonas sp. (strain WBC-3).